A 323-amino-acid polypeptide reads, in one-letter code: Beta-ketoacyl-[acyl-carrier-protein] synthase III (323 aa).

Residues cysteine 113 and histidine 250 contribute to the active site. Residues 251-255 are ACP-binding; the sequence is QANKR. Residue asparagine 280 is part of the active site.

It belongs to the thiolase-like superfamily. FabH family. As to quaternary structure, homodimer.

Its subcellular location is the cytoplasm. The enzyme catalyses malonyl-[ACP] + acetyl-CoA + H(+) = 3-oxobutanoyl-[ACP] + CO2 + CoA. It participates in lipid metabolism; fatty acid biosynthesis. Functionally, catalyzes the condensation reaction of fatty acid synthesis by the addition to an acyl acceptor of two carbons from malonyl-ACP. Catalyzes the first condensation reaction which initiates fatty acid synthesis and may therefore play a role in governing the total rate of fatty acid production. Possesses both acetoacetyl-ACP synthase and acetyl transacylase activities. Its substrate specificity determines the biosynthesis of branched-chain and/or straight-chain of fatty acids. In Brucella anthropi (strain ATCC 49188 / DSM 6882 / CCUG 24695 / JCM 21032 / LMG 3331 / NBRC 15819 / NCTC 12168 / Alc 37) (Ochrobactrum anthropi), this protein is Beta-ketoacyl-[acyl-carrier-protein] synthase III.